The primary structure comprises 65 residues: Ferredoxin-like protein in vnf region (65 aa).

4Fe-4S ferredoxin-type domains follow at residues 2–29 (AMAI…VLQG) and 30–65 (GIYV…PLDD). Residues cysteine 10, cysteine 13, cysteine 16, cysteine 20, cysteine 39, cysteine 42, cysteine 50, and cysteine 54 each coordinate [4Fe-4S] cluster.

Requires [4Fe-4S] cluster as cofactor.

The chain is Ferredoxin-like protein in vnf region from Azotobacter chroococcum mcd 1.